The sequence spans 473 residues: MRRGERRVAGGSGSESPLLKGRRSTESEVYDDGTNTFFWRAHTLTVLFILTCALGYVTLLEETPQDTAYNTKRGIVASILVFLCFGVTQAKDGPFSRPHPAYWRFWLCVSVVYELFLIFILFQTVQDGRQFLKYVDPRLGVPLPERDYGGNCLIYDADNKTDPFHNIWDKLDGFVPAHFIGWYLKTLMIRDWWMCMIISVMFEFLEYSLEHQLPNFSECWWDHWIMDVLVCNGLGIYCGMKTLEWLSLKTYKWQGLWNIPTYKGKMKRIAFQFTPYSWVRFEWKPASSLHRWLAVCGIILVFLLAELNTFYLKFVLWMPPEHYLVLLRLVFFVNVGGVAMREIYDFMDELKPHRKLGQQAWLVAAITVTELLIVVKYDPHTLTLSLPFYISQCWTLGSILVLTWTVWRFFLRDITMRYKETRRQKQQSHQARAVNNRDGHPGPDDDLLGTGTAEEEGTTNDGVTAEEGTSAAS.

Residues 1 to 25 (MRRGERRVAGGSGSESPLLKGRRST) are disordered. Residues 1-40 (MRRGERRVAGGSGSESPLLKGRRSTESEVYDDGTNTFFWR) are Cytoplasmic-facing. Phosphoserine is present on residues Ser-12, Ser-14, and Ser-16. A helical membrane pass occupies residues 41–61 (AHTLTVLFILTCALGYVTLLE). The Lumenal portion of the chain corresponds to 62 to 74 (ETPQDTAYNTKRG). The helical transmembrane segment at 75–95 (IVASILVFLCFGVTQAKDGPF) threads the bilayer. At 96 to 104 (SRPHPAYWR) the chain is on the cytoplasmic side. The helical transmembrane segment at 105–125 (FWLCVSVVYELFLIFILFQTV) threads the bilayer. At 126-291 (QDGRQFLKYV…EWKPASSLHR (166 aa)) the chain is on the lumenal side. Asn-159 is a glycosylation site (N-linked (GlcNAc...) asparagine). A helical membrane pass occupies residues 292–312 (WLAVCGIILVFLLAELNTFYL). Lys-313 is a topological domain (cytoplasmic). The chain crosses the membrane as a helical span at residues 314 to 334 (FVLWMPPEHYLVLLRLVFFVN). Topologically, residues 335 to 354 (VGGVAMREIYDFMDELKPHR) are lumenal. Residues 355–375 (KLGQQAWLVAAITVTELLIVV) traverse the membrane as a helical segment. At 376–381 (KYDPHT) the chain is on the cytoplasmic side. Residues 382–402 (LTLSLPFYISQCWTLGSILVL) form a helical membrane-spanning segment. Over 403–473 (TWTVWRFFLR…TAEEGTSAAS (71 aa)) the chain is Lumenal. The segment at 422-473 (RRQKQQSHQARAVNNRDGHPGPDDDLLGTGTAEEEGTTNDGVTAEEGTSAAS) is disordered.

The protein belongs to the phosphatidyl serine synthase family. Highly expressed in testis. Detected at lower levels in kidney and heart.

It localises to the endoplasmic reticulum membrane. The protein resides in the membrane. It carries out the reaction a 1,2-diacyl-sn-glycero-3-phosphoethanolamine + L-serine = a 1,2-diacyl-sn-glycero-3-phospho-L-serine + ethanolamine. The enzyme catalyses 1-hexadecanoyl-2-(9Z-octadecenoyl)-sn-glycero-3-phosphoethanolamine + L-serine = 1-hexadecanoyl-2-(9Z-octadecenoyl)-sn-glycero-3-phospho-L-serine + ethanolamine. It catalyses the reaction 1-hexadecanoyl-2-(4Z,7Z,10Z,13Z,16Z,19Z-docosahexaenoyl)-sn-glycero-3-phosphoethanolamine + L-serine = 1-hexadecanoyl-2-(4Z,7Z,10Z,13Z,16Z,19Z-docosahexaenoyl)-sn-glycero-3-phosphoserine + ethanolamine. The catalysed reaction is 1-octadecanoyl-2-(5Z,8Z,11Z,14Z)-eicosatetraenoyl-sn-glycero-3-phosphoethanolamine + L-serine = 1-octadecanoyl-2-(5Z,8Z,11Z,14Z)-eicosatetraenoyl-sn-glycero-3-phosphoserine + ethanolamine. It carries out the reaction 1-octadecanoyl-2-(4Z,7Z,10Z,13Z,16Z,19Z-docosahexaenoyl)-sn-glycero-3-phosphoethanolamine + L-serine = 1-octadecanoyl-2-(4Z,7Z,10Z,13Z,16Z,19Z-docosahexaenoyl)-sn-glycero-3-phosphoserine + ethanolamine. The enzyme catalyses 1-(1Z-octadecenyl)-2-(4Z,7Z,10Z,13Z,16Z,19Z-docosahexaenoyl)-sn-glycero-3-phosphoethanolamine + L-serine = 1-(1Z-octadecenyl)-2-(4Z,7Z,10Z,13Z,16Z,19Z-docosahexaenoyl)-sn-glycero-3-phospho-L-serine + ethanolamine. It catalyses the reaction 1-octadecanoyl-2-(9Z-octadecenoyl)-sn-glycero-3-phosphoethanolamine + L-serine = 1-octadecanoyl-2-(9Z-octadecenoyl)-sn-glycero-3-phospho-L-serine + ethanolamine. The catalysed reaction is 1-(1Z-octadecenyl)-2-(9Z-octadecenoyl)-sn-glycero-3-phosphoethanolamine + L-serine = 1-(1Z-octadecenyl)-2-(9Z-octadecenoyl)-sn-glycero-3-phospho-L-serine + ethanolamine. It carries out the reaction 1-(1Z-octadecenyl)-2-(5Z,8Z,11Z,14Z- eicosatetraenoyl)-sn-glycero-3-phosphoethanolamine + L-serine = 1-(1Z-octadecenyl)-2-(5Z,8Z,11Z,14Z-eicosatetraenoyl)-sn-glycero-3-phospho-L-serine + ethanolamine. It functions in the pathway phospholipid metabolism; phosphatidylserine biosynthesis. Its activity is regulated as follows. Almost complete inhibition by ethanolamine in both the mitochondria-associated membrane (MAM) and endoplasmic reticulum (ER) per se. Its function is as follows. Catalyzes a base-exchange reaction in which the polar head group of phosphatidylethanolamine (PE) or phosphatidylcholine (PC) is replaced by L-serine. Catalyzes the conversion of phosphatatidylethanolamine and does not act on phosphatidylcholine. Can utilize both phosphatidylethanolamine (PE) plasmalogen and diacyl PE as substrate and the latter is six times better utilized, indicating the importance of an ester linkage at the sn-1 position. Although it shows no sn-1 fatty acyl preference, exhibits significant preference towards docosahexaenoic acid (22:6n-3) compared with 18:1 or 20:4 at the sn-2 position. The protein is Phosphatidylserine synthase 2 (Ptdss2) of Mus musculus (Mouse).